Reading from the N-terminus, the 234-residue chain is Biosynthetic peptidoglycan transglycosylase (234 aa).

Residues 11–31 form a helical membrane-spanning segment; that stretch reads RFLLFAMLGFVGLSVLLVLVF.

The protein belongs to the glycosyltransferase 51 family.

It is found in the cell inner membrane. The enzyme catalyses [GlcNAc-(1-&gt;4)-Mur2Ac(oyl-L-Ala-gamma-D-Glu-L-Lys-D-Ala-D-Ala)](n)-di-trans,octa-cis-undecaprenyl diphosphate + beta-D-GlcNAc-(1-&gt;4)-Mur2Ac(oyl-L-Ala-gamma-D-Glu-L-Lys-D-Ala-D-Ala)-di-trans,octa-cis-undecaprenyl diphosphate = [GlcNAc-(1-&gt;4)-Mur2Ac(oyl-L-Ala-gamma-D-Glu-L-Lys-D-Ala-D-Ala)](n+1)-di-trans,octa-cis-undecaprenyl diphosphate + di-trans,octa-cis-undecaprenyl diphosphate + H(+). Its pathway is cell wall biogenesis; peptidoglycan biosynthesis. In terms of biological role, peptidoglycan polymerase that catalyzes glycan chain elongation from lipid-linked precursors. The sequence is that of Biosynthetic peptidoglycan transglycosylase from Chromohalobacter salexigens (strain ATCC BAA-138 / DSM 3043 / CIP 106854 / NCIMB 13768 / 1H11).